A 483-amino-acid polypeptide reads, in one-letter code: 3-isopropylmalate dehydratase large subunit (483 aa).

3 residues coordinate [4Fe-4S] cluster: Cys352, Cys412, and Cys415.

Belongs to the aconitase/IPM isomerase family. LeuC type 1 subfamily. Heterodimer of LeuC and LeuD. It depends on [4Fe-4S] cluster as a cofactor.

The catalysed reaction is (2R,3S)-3-isopropylmalate = (2S)-2-isopropylmalate. The protein operates within amino-acid biosynthesis; L-leucine biosynthesis; L-leucine from 3-methyl-2-oxobutanoate: step 2/4. Catalyzes the isomerization between 2-isopropylmalate and 3-isopropylmalate, via the formation of 2-isopropylmaleate. This is 3-isopropylmalate dehydratase large subunit from Paenarthrobacter aurescens (strain TC1).